The sequence spans 172 residues: Protein-export protein SecB (172 aa).

This sequence belongs to the SecB family. In terms of assembly, homotetramer, a dimer of dimers. One homotetramer interacts with 1 SecA dimer.

The protein resides in the cytoplasm. Its function is as follows. One of the proteins required for the normal export of preproteins out of the cell cytoplasm. It is a molecular chaperone that binds to a subset of precursor proteins, maintaining them in a translocation-competent state. It also specifically binds to its receptor SecA. In Xylella fastidiosa (strain 9a5c), this protein is Protein-export protein SecB.